The sequence spans 347 residues: GTP 3',8-cyclase (347 aa).

Positions 10-242 (RLNRPIGVLR…ERINARWPLE (233 aa)) constitute a Radical SAM core domain. Arg-19 contributes to the GTP binding site. Residues Cys-26 and Cys-30 each contribute to the [4Fe-4S] cluster site. S-adenosyl-L-methionine is bound at residue Tyr-32. Cys-33 contributes to the [4Fe-4S] cluster binding site. Position 65 (Arg-65) interacts with GTP. Residue Gly-69 participates in S-adenosyl-L-methionine binding. Thr-104 lines the GTP pocket. Ser-129 provides a ligand contact to S-adenosyl-L-methionine. Lys-178 provides a ligand contact to GTP. Position 212 (Met-212) interacts with S-adenosyl-L-methionine. Residues Cys-275 and Cys-278 each coordinate [4Fe-4S] cluster. 280 to 282 (RLR) contributes to the GTP binding site. Cys-292 contributes to the [4Fe-4S] cluster binding site.

This sequence belongs to the radical SAM superfamily. MoaA family. As to quaternary structure, monomer and homodimer. It depends on [4Fe-4S] cluster as a cofactor.

The enzyme catalyses GTP + AH2 + S-adenosyl-L-methionine = (8S)-3',8-cyclo-7,8-dihydroguanosine 5'-triphosphate + 5'-deoxyadenosine + L-methionine + A + H(+). It functions in the pathway cofactor biosynthesis; molybdopterin biosynthesis. Catalyzes the cyclization of GTP to (8S)-3',8-cyclo-7,8-dihydroguanosine 5'-triphosphate. The sequence is that of GTP 3',8-cyclase from Synechococcus sp. (strain CC9605).